The primary structure comprises 607 residues: MTLFILTETSAGYALLKAKDKKLLKRDDLEKETQTAEGVSNLLKLKNFQKFDSATTALEEVASLVEGKVTPRLASLLESIKDEKKVSLAVADPKLGNAIGKLPGLSIQAIADSTTADLYRAIRAHLPTLIPGLLPTDMSTMALGLSHSLARHKLKFSPDKIDTMIVQAIALLDDLDKELNTYAMRVKEWYGWHFPEMAKILNDNMAYAKVVLKMGMRSNSDSADLSEILPEEIEGAVKAAANRSMGTDISNEDLENIQCLAEQVVGFAEYRQQLASYLTARMTAIAPNLTALVGELVGARLIAHAGSLVNLSKSPASTIQILGAEKALFRALKTKHDTPKYGLIYHASLIGQATGKNKGKMARVLAAKAAIGLRVDALAEWEKDADGNEPTEEERAALGMESRYYLEKKLAAMEGKPLKPRGVGIAPNGIPIEQPKKWDIKEARKHNPDADGLTGDEPAATENVSKKSKKDKKLVEEIKDEEMKDAPESEEEEEASEAEESEEEKPKKSKKKESKTSKGKDSDEAKIEELAEKAGLSVKRYLRKLERGEINFDEDGNPTAISKKELKKAKKEAKKAEKDAGKKRKRDEDEEPAESKSEKKKKKKSKA.

One can recognise a Nop domain in the interval 285–415; it reads IAPNLTALVG…LEKKLAAMEG (131 aa). Disordered regions lie at residues 419-438 and 446-607; these read KPRG…PKKW and HNPD…KSKA. Residues 473-487 show a composition bias toward basic and acidic residues; sequence KLVEEIKDEEMKDAP. The segment covering 488 to 503 has biased composition (acidic residues); that stretch reads ESEEEEEASEAEESEE. Residues 514–532 show a composition bias toward basic and acidic residues; the sequence is SKTSKGKDSDEAKIEELAE. Residues 598–607 show a composition bias toward basic residues; that stretch reads EKKKKKKSKA.

This sequence belongs to the NOP5/NOP56 family.

It is found in the nucleus. Its subcellular location is the nucleolus. In terms of biological role, required for pre-18S rRNA processing. May bind microtubules. This is Nucleolar protein 58 (NOP58) from Coccidioides immitis (strain RS) (Valley fever fungus).